The following is a 431-amino-acid chain: SPI-1 type 3 secretion system ATPase (431 aa).

162–167 (GCGKTM) contacts ATP.

This sequence belongs to the ATPase alpha/beta chains family. T3SS ATPase subfamily. As to quaternary structure, the core secretion machinery of the T3SS is composed of approximately 20 different proteins, including cytoplasmic components, a base, an export apparatus and a needle. This subunit is part of the cytosolic complex. Forms homohexamers.

The protein resides in the cytoplasm. The catalysed reaction is ATP + H2O + cellular proteinSide 1 = ADP + phosphate + cellular proteinSide 2.. ATPase component of the type III secretion system (T3SS), also called injectisome, which is used to inject bacterial effector proteins into eukaryotic host cells. Acts as a molecular motor to provide the energy that is required for the export of proteins. Required for type III secretion apparatus (T3SA) formation, proper protein secretion, host cell invasion and virulence. May play a critical role in T3SS substrate recognition, disassembly of the effector/chaperone complex and unfolding of the effector in an ATP-dependent manner prior to secretion. The chain is SPI-1 type 3 secretion system ATPase from Salmonella typhi.